The primary structure comprises 232 residues: E3 ubiquitin-protein ligase RNF125 (232 aa).

Positions 1 to 10 (MGSVLSSDSG) are enriched in polar residues. A disordered region spans residues 1–27 (MGSVLSSDSGKSAPPSATPRALERRGD). G2 is lipidated: N-myristoyl glycine. Zn(2+) is bound by residues C37 and C40. Residues 37-76 (CAVCLEVLHQPVRTRCGHVFCRSCIATSLKNNKWTCPYCR) form an RING-type zinc finger. The segment at 43–45 (VLH) is interaction with the C2HC RNF-type zinc finger. Residues C52, H54, C57, C60, C72, C75, C100, and C103 each contribute to the Zn(2+) site. The C2HC RNF-type zinc-finger motif lies at 100–119 (CAECDTLVCLGEMRAHIRTC). Residues 109–113 (LGEMR) form an interaction with the RING-type zinc finger region. Zn(2+) is bound by residues H115 and C119. The segment at 120-128 (QKYIDKYGP) is linker region. Residues 210-224 (EEALIRRVLDRSLLE) form a required for interaction with ubiquitin and for autoubiquitination region.

As to quaternary structure, interacts with UBE2D1. Interacts with VCP/p97; leading to recruit RNF125 to RIGI and promote ubiquitination of RIGI. Post-translationally, autoubiquitinated, leading to its subsequent proteasomal degradation.

It is found in the golgi apparatus membrane. The catalysed reaction is S-ubiquitinyl-[E2 ubiquitin-conjugating enzyme]-L-cysteine + [acceptor protein]-L-lysine = [E2 ubiquitin-conjugating enzyme]-L-cysteine + N(6)-ubiquitinyl-[acceptor protein]-L-lysine.. It functions in the pathway protein modification; protein ubiquitination. Functionally, E3 ubiquitin-protein ligase that mediates ubiquitination and subsequent proteasomal degradation of target proteins, such as RIGI, MAVS/IPS1, IFIH1/MDA5, JAK1 and p53/TP53. Acts as a negative regulator of type I interferon production by mediating ubiquitination of RIGI at 'Lys-181', leading to RIGI degradation. Mediates ubiquitination and subsequent degradation of p53/TP53. Mediates ubiquitination and subsequent degradation of JAK1. Acts as a positive regulator of T-cell activation. This chain is E3 ubiquitin-protein ligase RNF125 (RNF125), found in Macaca fascicularis (Crab-eating macaque).